A 115-amino-acid chain; its full sequence is NADH-ubiquinone oxidoreductase chain 3 (115 aa).

Transmembrane regions (helical) follow at residues 3-23 (FALI…ITFW), 55-75 (FFLV…LLPL), and 84-104 (LPLM…SLAY).

It belongs to the complex I subunit 3 family. Core subunit of respiratory chain NADH dehydrogenase (Complex I) which is composed of 45 different subunits. Interacts with TMEM186. Interacts with TMEM242.

It localises to the mitochondrion inner membrane. It carries out the reaction a ubiquinone + NADH + 5 H(+)(in) = a ubiquinol + NAD(+) + 4 H(+)(out). Core subunit of the mitochondrial membrane respiratory chain NADH dehydrogenase (Complex I) which catalyzes electron transfer from NADH through the respiratory chain, using ubiquinone as an electron acceptor. Essential for the catalytic activity of complex I. This is NADH-ubiquinone oxidoreductase chain 3 from Homo sapiens (Human).